The chain runs to 142 residues: Coiled-coil-helix-coiled-coil-helix domain-containing protein 10, mitochondrial (142 aa).

Residues 1–16 (MPRGSRSAASRPASRP) constitute a mitochondrion transit peptide. A compositionally biased stretch (low complexity) spans 1–20 (MPRGSRSAASRPASRPAAPS). 2 disordered regions span residues 1-45 (MPRG…PGLM) and 68-97 (ALTG…PQPL). Positions 21-39 (AHPPAHPPPSAAAPAPAPS) are enriched in pro residues. Residues 80-90 (PSQPAVQQAPT) show a composition bias toward low complexity. In terms of domain architecture, CHCH spans 99–140 (MGPCAYEIRQFLDCSTTQSDLSLCEGFSEALKQCKYYHGLSS). 2 consecutive short sequence motifs (cx9C motif) follow at residues 102–112 (CAYEIRQFLDC) and 122–132 (CEGFSEALKQC). 2 disulfides stabilise this stretch: Cys102/Cys132 and Cys112/Cys122.

Ubiquitously expressed. Higher expression is observed in heart and liver.

It is found in the mitochondrion intermembrane space. May be involved in the maintenance of mitochondrial organization and mitochondrial cristae structure. The polypeptide is Coiled-coil-helix-coiled-coil-helix domain-containing protein 10, mitochondrial (CHCHD10) (Homo sapiens (Human)).